A 698-amino-acid polypeptide reads, in one-letter code: Phenylalanine aminomutase (L-beta-phenylalanine forming) (698 aa).

Tyr-80 functions as the Proton donor/acceptor in the catalytic mechanism. Positions Ala-175–Gly-177 form a cross-link, 5-imidazolinone (Ala-Gly). Position 176 is a 2,3-didehydroalanine (Ser) (Ser-176). Residues Asn-231, Gln-319, Arg-325, Asn-355, Lys-427, Glu-455, and Asn-458 each contribute to the (E)-cinnamate site.

Belongs to the PAL/histidase family. In terms of assembly, homotetramer. Contains an active site 4-methylidene-imidazol-5-one (MIO), which is formed autocatalytically by cyclization and dehydration of residues Ala-Ser-Gly.

It is found in the cytoplasm. It carries out the reaction L-phenylalanine = L-beta-phenylalanine. It catalyses the reaction L-phenylalanine = (E)-cinnamate + NH4(+). Its pathway is alkaloid biosynthesis; taxol biosynthesis. The protein operates within phenylpropanoid metabolism; trans-cinnamate biosynthesis; trans-cinnamate from L-phenylalanine: step 1/1. Its function is as follows. Phenylalanine aminomutase that catalyzes the rearrangement of L-phenylalanine to R-beta-phenylalanine. Catalyzes the first committed step in the biosynthesis of the side chain of the alkaloid taxol (paclitaxel), a widely-used compound with antitumor activity. Also has low phenylalanine ammonia-lyase activity. This Taxus canadensis (Canadian yew) protein is Phenylalanine aminomutase (L-beta-phenylalanine forming) (pam).